Reading from the N-terminus, the 521-residue chain is Cytochrome P450 monooxygenase bet2 (521 aa).

Residues 23–43 (SNWRFALFVAATLLTSYIVIV) form a helical membrane-spanning segment. A glycan (N-linked (GlcNAc...) asparagine) is linked at N188. C461 serves as a coordination point for heme.

Belongs to the cytochrome P450 family. Requires heme as cofactor.

The protein localises to the membrane. The enzyme catalyses dehydroprobetaenone I + NADPH + O2 + H(+) = epoxybetaenone + NADP(+) + H2O. It catalyses the reaction dehydroprobetaenone I + 3 NADPH + 3 O2 + 3 H(+) = betaenone C + 3 NADP(+) + 3 H2O. The protein operates within mycotoxin biosynthesis. Its function is as follows. Cytochrome P450 monooxygenase; part of the gene cluster that mediates the biosynthesis of betaenones, phytotoxic polyketides involved in leaf spot disease in sugar beets. The first step of the pathway is the synthesis of dehydroprobetaenone I by the polyketide synthase bet1 and the enoyl reductase bet3 via condensation of one acetyl-CoA starter unit with 7 malonyl-CoA units and 5 methylations. The C-terminal reductase (R) domain of bet1 catalyzes the reductive release of the polyketide chain. Because bet1 lacks a designated enoylreductase (ER) domain, the required activity is provided the enoyl reductase bet3. The short-chain dehydrogenase/reductase bet4 then catalyzes reduction of dehydroprobetaenone I to probetaenone I. The cytochrome P450 monooxygenase bet2 catalyzes successive epoxidation, oxidation (resulting from epoxide opening) and hydroxylation to install a tertiary alcohol in the decaline ring to yield betaenone C from dehydroprobetaenone I and betaenone B from probetaenone I. The FAD-linked oxidoreductase (orf1) is probably responsible for the conversion of betaenone C to betaenone A via an intramolecular aldol reaction between C-1 and C-17 to form the bridged tricyclic system in betaenone A. The protein is Cytochrome P450 monooxygenase bet2 of Neocamarosporium betae (Beet black rot fungus).